Here is a 293-residue protein sequence, read N- to C-terminus: Lymphocyte antigen 6 complex locus protein G6f (293 aa).

Residues 1–19 form the signal peptide; the sequence is MAMVVFLLLYLCGHPQAAA. The Ig-like V-type domain maps to 20–124; that stretch reads DNIQTLYVPS…HKYQNWRVYD (105 aa). At 20–237 the chain is on the extracellular side; sequence DNIQTLYVPS…APLPSWDVSW (218 aa). Cysteines 37 and 108 form a disulfide. The N-linked (GlcNAc...) asparagine glycan is linked to asparagine 90. A helical membrane pass occupies residues 238–258; sequence ILMLLFAAGQGVTIIALSIVI. The Cytoplasmic segment spans residues 259 to 293; that stretch reads WRHQRAQGTQDREPSIPHFKPEVQVYENIHLARLR. Tyrosine 284 carries the phosphotyrosine modification.

As to quaternary structure, homodimer; disulfide-linked. Interacts with GRB2 and GRB7 in a phosphorylation-dependent manner. Post-translationally, N-glycosylated.

The protein localises to the cell membrane. Its function is as follows. May play a role in the downstream signal transduction pathways involving GRB2 and GRB7. This chain is Lymphocyte antigen 6 complex locus protein G6f (Ly6g6f), found in Rattus norvegicus (Rat).